The following is an 89-amino-acid chain: uncharacterized protein (89 aa).

An N-terminal signal peptide occupies residues 1–19; sequence MIVRTLLIAAALLGGTAQA.

It is found in the secreted. This is an uncharacterized protein from Pseudomonas aeruginosa (strain UCBPP-PA14).